A 151-amino-acid chain; its full sequence is Sec-independent protein translocase protein TatB (151 aa).

Residues 1-21 (MFDIGFLELLICGVIALLVLG) form a helical membrane-spanning segment. Basic and acidic residues-rich tracts occupy residues 87–99 (KYEHMILPDDQTR) and 122–132 (EPPHEPVRDEA). A disordered region spans residues 87–151 (KYEHMILPDD…SPTSPSDKYS (65 aa)). A compositionally biased stretch (low complexity) spans 134–151 (ASDQPSDSSPTSPSDKYS).

Belongs to the TatB family. In terms of assembly, the Tat system comprises two distinct complexes: a TatABC complex, containing multiple copies of TatA, TatB and TatC subunits, and a separate TatA complex, containing only TatA subunits. Substrates initially bind to the TatABC complex, which probably triggers association of the separate TatA complex to form the active translocon.

The protein localises to the cell inner membrane. In terms of biological role, part of the twin-arginine translocation (Tat) system that transports large folded proteins containing a characteristic twin-arginine motif in their signal peptide across membranes. Together with TatC, TatB is part of a receptor directly interacting with Tat signal peptides. TatB may form an oligomeric binding site that transiently accommodates folded Tat precursor proteins before their translocation. In Marinobacter nauticus (strain ATCC 700491 / DSM 11845 / VT8) (Marinobacter aquaeolei), this protein is Sec-independent protein translocase protein TatB.